The primary structure comprises 475 residues: Ribulose bisphosphate carboxylase large chain (475 aa).

Positions 1-2 (MS) are excised as a propeptide. At proline 3 the chain carries N-acetylproline. Position 14 is an N6,N6,N6-trimethyllysine (lysine 14). Substrate is bound by residues asparagine 123 and threonine 173. The active-site Proton acceptor is the lysine 175. A substrate-binding site is contributed by lysine 177. Mg(2+) is bound by residues lysine 201, aspartate 203, and glutamate 204. Lysine 201 carries the post-translational modification N6-carboxylysine. Histidine 294 (proton acceptor) is an active-site residue. Residues arginine 295, histidine 327, and serine 379 each contribute to the substrate site.

It belongs to the RuBisCO large chain family. Type I subfamily. In terms of assembly, heterohexadecamer of 8 large chains and 8 small chains; disulfide-linked. The disulfide link is formed within the large subunit homodimers. Mg(2+) serves as cofactor. Post-translationally, the disulfide bond which can form in the large chain dimeric partners within the hexadecamer appears to be associated with oxidative stress and protein turnover.

It localises to the plastid. It is found in the chloroplast. It carries out the reaction 2 (2R)-3-phosphoglycerate + 2 H(+) = D-ribulose 1,5-bisphosphate + CO2 + H2O. The catalysed reaction is D-ribulose 1,5-bisphosphate + O2 = 2-phosphoglycolate + (2R)-3-phosphoglycerate + 2 H(+). Its function is as follows. RuBisCO catalyzes two reactions: the carboxylation of D-ribulose 1,5-bisphosphate, the primary event in carbon dioxide fixation, as well as the oxidative fragmentation of the pentose substrate in the photorespiration process. Both reactions occur simultaneously and in competition at the same active site. This Cucumis sativus (Cucumber) protein is Ribulose bisphosphate carboxylase large chain (rbcL).